We begin with the raw amino-acid sequence, 307 residues long: Protoheme IX farnesyltransferase (307 aa).

9 consecutive transmembrane segments (helical) span residues 28–48 (LVIF…NPIL), 50–70 (FTAI…NQWW), 99–117 (FGIL…AINW), 121–138 (IILA…TIWL), 146–166 (IVIG…AVTG), 173–193 (VLLF…LALF), 219–239 (ILVY…IGAT), 241–261 (AIYG…SVPV), and 278–298 (LFGF…ADRY).

Belongs to the UbiA prenyltransferase family. Protoheme IX farnesyltransferase subfamily.

The protein localises to the cell inner membrane. It catalyses the reaction heme b + (2E,6E)-farnesyl diphosphate + H2O = Fe(II)-heme o + diphosphate. It participates in porphyrin-containing compound metabolism; heme O biosynthesis; heme O from protoheme: step 1/1. Its function is as follows. Converts heme B (protoheme IX) to heme O by substitution of the vinyl group on carbon 2 of heme B porphyrin ring with a hydroxyethyl farnesyl side group. This Erythrobacter litoralis (strain HTCC2594) protein is Protoheme IX farnesyltransferase.